The sequence spans 432 residues: UDP-N-acetylmuramate--L-alanine ligase (432 aa).

108–114 serves as a coordination point for ATP; the sequence is GAHGKTS.

The protein belongs to the MurCDEF family.

The protein resides in the cytoplasm. The enzyme catalyses UDP-N-acetyl-alpha-D-muramate + L-alanine + ATP = UDP-N-acetyl-alpha-D-muramoyl-L-alanine + ADP + phosphate + H(+). The protein operates within cell wall biogenesis; peptidoglycan biosynthesis. Cell wall formation. This Bacillus pumilus (strain SAFR-032) protein is UDP-N-acetylmuramate--L-alanine ligase.